We begin with the raw amino-acid sequence, 417 residues long: MAP kinase-interacting serine/threonine-protein kinase 1 (417 aa).

Residues 1–20 (MVSSQPVPIDDGGKRRKKKR) are disordered. One can recognise a Protein kinase domain in the interval 37 to 321 (RLTDELLGEG…AAQVLQHPWL (285 aa)). ATP is bound by residues 43 to 51 (LGEGAYAKV) and lysine 66. The active-site Proton acceptor is aspartate 158. Residues 397–417 (AHARKGGSHLTHTTVTSQGAT) form a disordered region. The segment covering 406-417 (LTHTTVTSQGAT) has biased composition (polar residues).

It belongs to the protein kinase superfamily. CAMK Ser/Thr protein kinase family. The cofactor is Mg(2+).

The catalysed reaction is L-seryl-[protein] + ATP = O-phospho-L-seryl-[protein] + ADP + H(+). It carries out the reaction L-threonyl-[protein] + ATP = O-phospho-L-threonyl-[protein] + ADP + H(+). In terms of biological role, may play a role in the response to environmental stress and cytokines. Appears to regulate translation by phosphorylating EIF4E, thus increasing the affinity of this protein for the 7-methylguanosine-containing mRNA cap. The chain is MAP kinase-interacting serine/threonine-protein kinase 1 (mknk1) from Xenopus tropicalis (Western clawed frog).